Here is a 396-residue protein sequence, read N- to C-terminus: Obg-like ATPase 1 (396 aa).

An OBG-type G domain is found at 23–283 (LKIGIVGLPN…LSAEERQKYL (261 aa)). Residue 32 to 37 (NVGKST) coordinates ATP. Residues Ser-36 and Thr-56 each coordinate Mg(2+). Residue Leu-231 participates in ATP binding. Positions 267-274 (LELKLQEL) match the Nuclear export signal motif. At Lys-294 the chain carries N6-acetyllysine. The TGS domain occupies 304–387 (QLEYFFTAGP…EDGDIIFFKF (84 aa)).

Belongs to the TRAFAC class OBG-HflX-like GTPase superfamily. OBG GTPase family. YchF/OLA1 subfamily. In terms of assembly, monomer. Mg(2+) serves as cofactor. In terms of tissue distribution, expressed in all tissues tested but its expression is more abundant in testis, liver, lung, and brain. Overexpressed in several malignancies, including cancers of the colon, rectum, ovary, lung, stomach, and uterus.

It localises to the cytoplasm. It is found in the nucleus. Its subcellular location is the nucleolus. Hydrolyzes ATP, and can also hydrolyze GTP with lower efficiency. Has lower affinity for GTP. This is Obg-like ATPase 1 from Homo sapiens (Human).